A 158-amino-acid polypeptide reads, in one-letter code: NAD(P)H-quinone oxidoreductase subunit N (158 aa).

This sequence belongs to the complex I NdhN subunit family. As to quaternary structure, NDH-1 can be composed of about 15 different subunits; different subcomplexes with different compositions have been identified which probably have different functions.

The protein localises to the cellular thylakoid membrane. The enzyme catalyses a plastoquinone + NADH + (n+1) H(+)(in) = a plastoquinol + NAD(+) + n H(+)(out). It carries out the reaction a plastoquinone + NADPH + (n+1) H(+)(in) = a plastoquinol + NADP(+) + n H(+)(out). Its function is as follows. NDH-1 shuttles electrons from an unknown electron donor, via FMN and iron-sulfur (Fe-S) centers, to quinones in the respiratory and/or the photosynthetic chain. The immediate electron acceptor for the enzyme in this species is believed to be plastoquinone. Couples the redox reaction to proton translocation, and thus conserves the redox energy in a proton gradient. Cyanobacterial NDH-1 also plays a role in inorganic carbon-concentration. The protein is NAD(P)H-quinone oxidoreductase subunit N of Prochlorococcus marinus (strain MIT 9312).